We begin with the raw amino-acid sequence, 65 residues long: Large ribosomal subunit protein bL35 (65 aa).

The protein belongs to the bacterial ribosomal protein bL35 family.

The sequence is that of Large ribosomal subunit protein bL35 from Phytoplasma australiense.